Reading from the N-terminus, the 434-residue chain is Protein TolB homolog (434 aa).

The signal sequence occupies residues M1 to A27. The segment at S413–K434 is disordered.

Belongs to the TolB family.

It is found in the periplasm. The polypeptide is Protein TolB homolog (Chlorobaculum tepidum (strain ATCC 49652 / DSM 12025 / NBRC 103806 / TLS) (Chlorobium tepidum)).